The following is a 470-amino-acid chain: Annexin C1 (470 aa).

A disordered region spans residues 1–143; sequence MYGQQNNYGA…QGQSPMMYLG (143 aa). A compositionally biased stretch (low complexity) spans 15 to 34; the sequence is QWGQAPPQGYQPGYQNGPPA. Residues 82-92 are compositionally biased toward pro residues; it reads PQPPFGAPSPA. 2 stretches are compositionally biased toward low complexity: residues 93–110 and 128–138; these read PAGY…YGAP and GYGSQPQGQSP. Annexin repeat units lie at residues 161-232, 233-304, 316-388, and 395-468; these read YDAR…LLSL, GPLG…MALS, QLVQ…FIAR, and DGVV…GIIE.

This sequence belongs to the annexin family.

In terms of biological role, does not appear to play a major role in virulence. May play a role in titan cell formation. The sequence is that of Annexin C1 from Cryptococcus neoformans var. grubii serotype A (strain H99 / ATCC 208821 / CBS 10515 / FGSC 9487) (Filobasidiella neoformans var. grubii).